The following is a 439-amino-acid chain: MVAGAVAGALIGAAVVAATAATGGLAAVILAGSIAAGGLSMFQIVKGLTTIFELPEPTTGVLIRGSFNVYVNSRNAMRAGDDVSATCSGLPLNHPLWPFPVLIAEGSATVYINGKPAARLQSKMVCGAHIKTGSQNTFIGGPTERVAFVLDLEEWLHTGLEALGLAALAGGLLLAAMAGVAALVGVVAIGGLMMGGMALLGDLGDRLGPGYRDLFQGVAGMALLGFGPKMARLGNAPKGAPKTQVPKGFEKVYGKAPAAKAEIDAVADGLAAKHGGRVAKAPIKSRERAMQKINNDYKGDPTKIKDLARNTIIVEGDKVNTVAAELANRGAKVKVIDGNADPLGYSGVNSTMNTKAGIPGEIQVNSPEMIYAKESEDMARILLGNDTYDAVAAKAGVPGGQGHKYYEDWRVLDPKSPEAQAIAEKSRAYYDAVRKGNGN.

It localises to the secreted. The enzyme catalyses AMP + ATP = adenosine 3'-diphosphate,5'-phosphate + AMP + H(+). The catalysed reaction is ADP + ATP = adenosine 3'-diphosphate,5'-diphosphate + AMP. It carries out the reaction 2 ATP = adenosine 3'-diphosphate,5'-triphosphate + AMP. Its function is as follows. Type VI secretion exported toxin that pyrophosphorylates adenosine nucleotides to produce (p)ppApp. Thereby, depletes cellular ADP and ATP to dysregulate central metabolism in competitor cells. This Pseudomonas aeruginosa (strain UCBPP-PA14) protein is (p)ppApp synthetase toxin Tas1 (tas1).